The chain runs to 263 residues: 3-methyl-2-oxobutanoate hydroxymethyltransferase (263 aa).

2 residues coordinate Mg(2+): Asp45 and Asp84. Residues 45 to 46 (DS), Asp84, and Lys112 contribute to the 3-methyl-2-oxobutanoate site. Glu114 contacts Mg(2+). Catalysis depends on Glu181, which acts as the Proton acceptor.

The protein belongs to the PanB family. Homodecamer; pentamer of dimers. Requires Mg(2+) as cofactor.

It is found in the cytoplasm. It catalyses the reaction 3-methyl-2-oxobutanoate + (6R)-5,10-methylene-5,6,7,8-tetrahydrofolate + H2O = 2-dehydropantoate + (6S)-5,6,7,8-tetrahydrofolate. Its pathway is cofactor biosynthesis; (R)-pantothenate biosynthesis; (R)-pantoate from 3-methyl-2-oxobutanoate: step 1/2. In terms of biological role, catalyzes the reversible reaction in which hydroxymethyl group from 5,10-methylenetetrahydrofolate is transferred onto alpha-ketoisovalerate to form ketopantoate. This Buchnera aphidicola subsp. Schizaphis graminum (strain Sg) protein is 3-methyl-2-oxobutanoate hydroxymethyltransferase.